Here is a 364-residue protein sequence, read N- to C-terminus: 3-isopropylmalate dehydrogenase (364 aa).

76–89 contributes to the NAD(+) binding site; that stretch reads GPKWEKLPPNEQPE. The substrate site is built by Arg97, Arg107, Arg136, and Asp225. Mg(2+) contacts are provided by Asp225, Asp249, and Asp253. Residue 283–295 participates in NAD(+) binding; it reads GSAPDIAGKGIAN.

This sequence belongs to the isocitrate and isopropylmalate dehydrogenases family. LeuB type 1 subfamily. As to quaternary structure, homodimer. Requires Mg(2+) as cofactor. It depends on Mn(2+) as a cofactor.

The protein localises to the cytoplasm. It carries out the reaction (2R,3S)-3-isopropylmalate + NAD(+) = 4-methyl-2-oxopentanoate + CO2 + NADH. It functions in the pathway amino-acid biosynthesis; L-leucine biosynthesis; L-leucine from 3-methyl-2-oxobutanoate: step 3/4. Its function is as follows. Catalyzes the oxidation of 3-carboxy-2-hydroxy-4-methylpentanoate (3-isopropylmalate) to 3-carboxy-4-methyl-2-oxopentanoate. The product decarboxylates to 4-methyl-2 oxopentanoate. In Shewanella oneidensis (strain ATCC 700550 / JCM 31522 / CIP 106686 / LMG 19005 / NCIMB 14063 / MR-1), this protein is 3-isopropylmalate dehydrogenase.